The primary structure comprises 69 residues: Large ribosomal subunit protein bL28 (69 aa).

Residues 1–27 (MSRRCSVSGKGPLVGNNVSHANNKTKR) form a disordered region.

Belongs to the bacterial ribosomal protein bL28 family.

The chain is Large ribosomal subunit protein bL28 from Sulfurovum sp. (strain NBC37-1).